The sequence spans 416 residues: Gamma-glutamyl phosphate reductase (416 aa).

This sequence belongs to the gamma-glutamyl phosphate reductase family.

It localises to the cytoplasm. The catalysed reaction is L-glutamate 5-semialdehyde + phosphate + NADP(+) = L-glutamyl 5-phosphate + NADPH + H(+). The protein operates within amino-acid biosynthesis; L-proline biosynthesis; L-glutamate 5-semialdehyde from L-glutamate: step 2/2. In terms of biological role, catalyzes the NADPH-dependent reduction of L-glutamate 5-phosphate into L-glutamate 5-semialdehyde and phosphate. The product spontaneously undergoes cyclization to form 1-pyrroline-5-carboxylate. The polypeptide is Gamma-glutamyl phosphate reductase (Halalkalibacterium halodurans (strain ATCC BAA-125 / DSM 18197 / FERM 7344 / JCM 9153 / C-125) (Bacillus halodurans)).